The sequence spans 447 residues: Cytochrome P450 monooxygenase aunB (447 aa).

A heme-binding site is contributed by cysteine 386.

Belongs to the cytochrome P450 family. Heme is required as a cofactor.

It carries out the reaction 2 fonsecin B + NADPH + O2 + H(+) = aurasperone B + NADP(+) + 2 H2O. It catalyses the reaction 2 rubrofusarin B + NADPH + O2 + H(+) = aurasperone A + NADP(+) + 2 H2O. The protein operates within secondary metabolite biosynthesis. Functionally, cytochrome P450 monooxygenase; part of the gene cluster that mediates the biosynthesis of aurasperone B, a dimeric gamma-naphthopyrone. The first step in the biosynthesis of aurasperone B is the production of gamma-naphthopyrone precursor YWA1 by the non-reducing polyketide synthase albA, via condensation of one acetyl-CoA starter unit with 6 malonyl-CoA units. YWA1 is then methylated by aunE at position C-6 to yield foncesin which is further methylated at position C-8 by aunD to produce fonsecin B. A key enzyme in the biosynthetic pathway is the cytochrome P450 monooxygenase aunB which catalyzes the oxidative dimerization of fonsecin B to aurasperone B. AunB also catalyzes the oxidative dimerization of rubrofusarin B into aurasperone A. The protein is Cytochrome P450 monooxygenase aunB of Aspergillus niger (strain ATCC MYA-4892 / CBS 513.88 / FGSC A1513).